A 910-amino-acid polypeptide reads, in one-letter code: Triacylglycerol lipase 4 (910 aa).

The segment covering 51–66 has biased composition (basic and acidic residues); the sequence is SKDNSDVERVEEDAGK. The interval 51 to 120 is disordered; sequence SKDNSDVERV…TDEGEDERQG (70 aa). Ser-55 is subject to Phosphoserine. Residues 70 to 85 show a composition bias toward polar residues; sequence TGKNKTTNKVNFNLDT. Acidic residues predominate over residues 90–116; sequence KLDDDQETVTENENNDIEMVETDEGED. In terms of domain architecture, PNPLA spans 282–483; that stretch reads LVLSGGGTFG…DNDLPISRLS (202 aa). Positions 286–291 match the GXGXXG motif; it reads GGGTFG. Positions 313-317 match the GXSXG motif; sequence GSSAG. Ser-315 serves as the catalytic Nucleophile. Catalysis depends on Asp-470, which acts as the Proton acceptor. 2 disordered regions span residues 657-683 and 713-777; these read EQTSDESKNPENSTLLTRTPTKGDNHI and SPSG…PILQ. The segment covering 666-683 has biased composition (polar residues); sequence PENSTLLTRTPTKGDNHI. The residue at position 675 (Thr-675) is a Phosphothreonine; by Cdk1. Phosphoserine is present on residues Ser-737, Ser-749, Ser-751, and Ser-836. Residues 739–768 show a composition bias toward polar residues; it reads TISTSRRPAKSFSFSVASPTSRMLRQSSKI. The disordered stretch occupies residues 874–910; it reads RRHSIDGRPPSQATKSSPFRSRPSSSTQHKSTTSFTQ. Low complexity predominate over residues 889-899; that stretch reads SSPFRSRPSSS. Ser-890 bears the Phosphoserine; by Cdk1 mark. Polar residues predominate over residues 900-910; that stretch reads TQHKSTTSFTQ.

Post-translationally, phosphorylation at Thr-675 and Ser-890 by Cdk1/CDC28 stimulates enzyme activity in vivo.

The protein localises to the lipid droplet. It catalyses the reaction a triacylglycerol + H2O = a diacylglycerol + a fatty acid + H(+). The catalysed reaction is 1,2,3-tri-(9Z-octadecenoyl)-glycerol + H2O = di-(9Z)-octadecenoylglycerol + (9Z)-octadecenoate + H(+). The enzyme catalyses 1,2-dihexadecanoyl-sn-glycero-3-phosphocholine + H2O = 1-hexadecanoyl-sn-glycero-3-phosphocholine + hexadecanoate + H(+). It carries out the reaction cholesteryl (9Z-octadecenoate) + H2O = cholesterol + (9Z)-octadecenoate + H(+). It catalyses the reaction 1-(9Z-octadecenoyl)-sn-glycero-3-phosphate + (9Z)-octadecenoyl-CoA = 1,2-di-(9Z-octadecenoyl)-sn-glycero-3-phosphate + CoA. Its activity is regulated as follows. Phosphorylated and activated by cyclin-dependent kinase 1 (Cdk1/CDC28). Loses its lipolytic activity in cells lacking nonpolar lipids, but retains its side activity as lysophospholipid acyltransferase. In terms of biological role, lipid particle-localized triacylglycerol (TAG) lipase. The lipid droplet/particle is a lipid storage compartment which serves as a depot of energy and building blocks for membrane lipid biosynthesis. Involved in the mobilization of the non-polar storage lipids triacylglycerols (TAGs) from lipid particles by hydrolysis of TAGs, releasing and supplying specific fatty acids to the appropriate metabolic pathways. Also has steryl ester (SE) hydrolase and phospholipase A(2) (PLA(2)) activities, and catalyzes the acylation of lysophosphatidic acid (LPA). Contributes to early bud formation in late G1 phase of the cell cycle upon phosphorylation and activation by cyclin-dependent kinase 1 (Cdk1/CDC28). The chain is Triacylglycerol lipase 4 (TGL4) from Saccharomyces cerevisiae (strain ATCC 204508 / S288c) (Baker's yeast).